A 158-amino-acid chain; its full sequence is Transcription elongation factor GreA (158 aa).

Positions 48–75 (NSEYDSAKEDQAFVEGRIAQLEKMIRNA) form a coiled coil.

Belongs to the GreA/GreB family.

Its function is as follows. Necessary for efficient RNA polymerase transcription elongation past template-encoded arresting sites. The arresting sites in DNA have the property of trapping a certain fraction of elongating RNA polymerases that pass through, resulting in locked ternary complexes. Cleavage of the nascent transcript by cleavage factors such as GreA or GreB allows the resumption of elongation from the new 3'terminus. GreA releases sequences of 2 to 3 nucleotides. The chain is Transcription elongation factor GreA from Shouchella clausii (strain KSM-K16) (Alkalihalobacillus clausii).